Here is a 260-residue protein sequence, read N- to C-terminus: Diphthine synthase (260 aa).

Residues leucine 9, aspartate 85, isoleucine 88, 113 to 114, leucine 168, alanine 202, and histidine 227 each bind S-adenosyl-L-methionine; that span reads TA.

Belongs to the diphthine synthase family. Homodimer.

The catalysed reaction is 2-[(3S)-amino-3-carboxypropyl]-L-histidyl-[translation elongation factor 2] + 3 S-adenosyl-L-methionine = diphthine-[translation elongation factor 2] + 3 S-adenosyl-L-homocysteine + 3 H(+). It participates in protein modification; peptidyl-diphthamide biosynthesis. Its function is as follows. S-adenosyl-L-methionine-dependent methyltransferase that catalyzes the trimethylation of the amino group of the modified target histidine residue in translation elongation factor 2 (EF-2), to form an intermediate called diphthine. The three successive methylation reactions represent the second step of diphthamide biosynthesis. The polypeptide is Diphthine synthase (Haloquadratum walsbyi (strain DSM 16790 / HBSQ001)).